The chain runs to 335 residues: Capsular polysaccharide phosphotransferase WcwK (335 aa).

The protein belongs to the stealth family.

The polypeptide is Capsular polysaccharide phosphotransferase WcwK (wcwK) (Streptococcus pneumoniae).